The sequence spans 598 residues: Eukaryotic translation initiation factor 3 subunit D (598 aa).

Residues 104–178 form a disordered region; that stretch reads VKTRGFGRGG…YDKPQRNRDS (75 aa). Residues 109–132 show a composition bias toward gly residues; the sequence is FGRGGGTIFRGRGQRGGAQRGRGG. Residues 165–177 are compositionally biased toward basic and acidic residues; that stretch reads GWKDYDKPQRNRD. Positions 304-318 are RNA gate; the sequence is SIDLVTVNENAADAP. The segment at 574–598 is disordered; the sequence is NTFEEEDDTGAKAEKDEESEEKDEE. The segment covering 589–598 has biased composition (acidic residues); it reads DEESEEKDEE.

Belongs to the eIF-3 subunit D family. In terms of assembly, component of the eukaryotic translation initiation factor 3 (eIF-3) complex.

Its subcellular location is the cytoplasm. Functionally, mRNA cap-binding component of the eukaryotic translation initiation factor 3 (eIF-3) complex, which is involved in protein synthesis of a specialized repertoire of mRNAs and, together with other initiation factors, stimulates binding of mRNA and methionyl-tRNAi to the 40S ribosome. The eIF-3 complex specifically targets and initiates translation of a subset of mRNAs involved in cell proliferation. In the eIF-3 complex, eif3d specifically recognizes and binds the 7-methylguanosine cap of a subset of mRNAs. This is Eukaryotic translation initiation factor 3 subunit D from Coccidioides immitis (strain RS) (Valley fever fungus).